Here is a 162-residue protein sequence, read N- to C-terminus: D-aminoacyl-tRNA deacylase (162 aa).

Positions 145–146 (GP) match the Gly-cisPro motif, important for rejection of L-amino acids motif.

The protein belongs to the DTD family. Homodimer.

Its subcellular location is the cytoplasm. The catalysed reaction is glycyl-tRNA(Ala) + H2O = tRNA(Ala) + glycine + H(+). It catalyses the reaction a D-aminoacyl-tRNA + H2O = a tRNA + a D-alpha-amino acid + H(+). Its function is as follows. An aminoacyl-tRNA editing enzyme that deacylates mischarged D-aminoacyl-tRNAs. Also deacylates mischarged glycyl-tRNA(Ala), protecting cells against glycine mischarging by AlaRS. Acts via tRNA-based rather than protein-based catalysis; rejects L-amino acids rather than detecting D-amino acids in the active site. By recycling D-aminoacyl-tRNA to D-amino acids and free tRNA molecules, this enzyme counteracts the toxicity associated with the formation of D-aminoacyl-tRNA entities in vivo and helps enforce protein L-homochirality. The polypeptide is D-aminoacyl-tRNA deacylase (Bifidobacterium longum (strain NCC 2705)).